The following is a 511-amino-acid chain: IWS1-like protein (511 aa).

A disordered region spans residues 1 to 200 (MSDHEEESHG…DDGPVDRHGR (200 aa)). Low complexity-rich tracts occupy residues 11 to 30 (ASPT…PISP) and 55 to 86 (APAS…SPVK). Acidic residues predominate over residues 94-103 (DSDEDSDAEE). Over residues 134 to 143 (HEGTSKKEPT) the composition is skewed to basic and acidic residues. Acidic residues predominate over residues 166–179 (LDEFVEGRDEEESQ). One can recognise a TFIIS N-terminal domain in the interval 294–374 (SALSEWLAPL…GEWARPIYHL (81 aa)). Positions 382–454 (SRQEREERDY…RARVPKPSTK (73 aa)) are disordered. Composition is skewed to basic and acidic residues over residues 383–395 (RQER…SRMP) and 414–425 (DQPKRPRIRDAD).

The protein belongs to the IWS1 family.

Its subcellular location is the nucleus. This Caenorhabditis elegans protein is IWS1-like protein.